The chain runs to 105 residues: U-scoloptoxin(05)-Ssd1a (105 aa).

A signal peptide spans 1–24; it reads MKEAVKMSCLCIFVFLFLFSLTDA. The interval 79–105 is disordered; sequence HVPESNQKDGKVSTHMSSCNTDGCNAN. The span at 92–105 shows a compositional bias: polar residues; that stretch reads THMSSCNTDGCNAN.

The protein belongs to the scoloptoxin-05 family. In terms of processing, contains 4 disulfide bonds. In terms of tissue distribution, expressed by the venom gland.

It is found in the secreted. The chain is U-scoloptoxin(05)-Ssd1a from Scolopendra dehaani (Thai centipede).